Reading from the N-terminus, the 440-residue chain is Cytochrome c biogenesis protein Ccs1 (440 aa).

Helical transmembrane passes span 19-39, 78-98, and 164-184; these read LRLA…GTFI, NIWF…CTYT, and VGPI…ACGA.

It belongs to the Ccs1/CcsB family. May interact with CcsA.

It is found in the plastid. The protein resides in the chloroplast thylakoid membrane. In terms of biological role, required during biogenesis of c-type cytochromes (cytochrome c6 and cytochrome f) at the step of heme attachment. The polypeptide is Cytochrome c biogenesis protein Ccs1 (Emiliania huxleyi (Coccolithophore)).